A 261-amino-acid chain; its full sequence is Cytochrome c oxidase subunit 3 (261 aa).

Residues 1 to 15 (MTHQTHAYHMVNPSP) lie on the Mitochondrial matrix side of the membrane. A helical membrane pass occupies residues 16–34 (WPLTGALSALLMTFGLIMW). At 35-40 (FHFNST) the chain is on the mitochondrial intermembrane side. Residues 41-66 (ALLMLGLTTNMLTMYQWWRDIIREST) traverse the membrane as a helical segment. Residues 67-72 (FQGHHT) are Mitochondrial matrix-facing. A helical membrane pass occupies residues 73–105 (PVVQKGLRYGMILFIISEVLFFTGFFWAFYHSS). The Mitochondrial intermembrane portion of the chain corresponds to 106–128 (LAPTPELGGCWPPTGIHPLNPLE). Residues 129-152 (VPLLNTSVLLASGVSITWAHHSLM) traverse the membrane as a helical segment. Over 153 to 155 (EGH) the chain is Mitochondrial matrix. Residues 156–183 (RNHMLQALFITIALGVYFTLLQASEYYE) form a helical membrane-spanning segment. At 184–190 (APFTISD) the chain is on the mitochondrial intermembrane side. The helical transmembrane segment at 191–223 (GVYGSTFFVATGFHGLHVIIGSTFLIVCFFRQL) threads the bilayer. Residues 224-232 (KFHFTSSHH) are Mitochondrial matrix-facing. A helical transmembrane segment spans residues 233-256 (FGFEAAAWYWHFVDVVWLFLYVSI). At 257 to 261 (YWWGS) the chain is on the mitochondrial intermembrane side.

This sequence belongs to the cytochrome c oxidase subunit 3 family. In terms of assembly, component of the cytochrome c oxidase (complex IV, CIV), a multisubunit enzyme composed of 14 subunits. The complex is composed of a catalytic core of 3 subunits MT-CO1, MT-CO2 and MT-CO3, encoded in the mitochondrial DNA, and 11 supernumerary subunits COX4I, COX5A, COX5B, COX6A, COX6B, COX6C, COX7A, COX7B, COX7C, COX8 and NDUFA4, which are encoded in the nuclear genome. The complex exists as a monomer or a dimer and forms supercomplexes (SCs) in the inner mitochondrial membrane with NADH-ubiquinone oxidoreductase (complex I, CI) and ubiquinol-cytochrome c oxidoreductase (cytochrome b-c1 complex, complex III, CIII), resulting in different assemblies (supercomplex SCI(1)III(2)IV(1) and megacomplex MCI(2)III(2)IV(2)).

Its subcellular location is the mitochondrion inner membrane. The enzyme catalyses 4 Fe(II)-[cytochrome c] + O2 + 8 H(+)(in) = 4 Fe(III)-[cytochrome c] + 2 H2O + 4 H(+)(out). Its function is as follows. Component of the cytochrome c oxidase, the last enzyme in the mitochondrial electron transport chain which drives oxidative phosphorylation. The respiratory chain contains 3 multisubunit complexes succinate dehydrogenase (complex II, CII), ubiquinol-cytochrome c oxidoreductase (cytochrome b-c1 complex, complex III, CIII) and cytochrome c oxidase (complex IV, CIV), that cooperate to transfer electrons derived from NADH and succinate to molecular oxygen, creating an electrochemical gradient over the inner membrane that drives transmembrane transport and the ATP synthase. Cytochrome c oxidase is the component of the respiratory chain that catalyzes the reduction of oxygen to water. Electrons originating from reduced cytochrome c in the intermembrane space (IMS) are transferred via the dinuclear copper A center (CU(A)) of subunit 2 and heme A of subunit 1 to the active site in subunit 1, a binuclear center (BNC) formed by heme A3 and copper B (CU(B)). The BNC reduces molecular oxygen to 2 water molecules using 4 electrons from cytochrome c in the IMS and 4 protons from the mitochondrial matrix. The protein is Cytochrome c oxidase subunit 3 (MT-CO3) of Tragelaphus oryx (Eland).